A 275-amino-acid chain; its full sequence is MATYLVGDLQGCYDELQRLLEKVQFDSTQDQLYLVGDLVARGDKSLECLRFVKSLGKSAKTVLGNHDLHLISTALGIKKVKVRDRVDAIFHAPDFEELIDWLRHQPLLVHNEQQNFLMTHAGISPDWDLATAKQCAHEVENVLRHGDYHNLIENMYENRPDRWHDDLQGLDRLRYSINVFTRMRFCYWDHRLDFDCKLPPESAPEELTPWFNLANPLYQTIPIVFGHWASLVNTTTPNNIYALDTGCVWGNRMTMLRWEDKQYFSQHAVKNYRDF.

The protein belongs to the Ap4A hydrolase family.

It carries out the reaction P(1),P(4)-bis(5'-adenosyl) tetraphosphate + H2O = 2 ADP + 2 H(+). Functionally, hydrolyzes diadenosine 5',5'''-P1,P4-tetraphosphate to yield ADP. The polypeptide is Bis(5'-nucleosyl)-tetraphosphatase, symmetrical (apaH) (Pasteurella multocida (strain Pm70)).